The sequence spans 212 residues: MGRRSSKDRSITPDILLRAYSIGLFPMAESSDDPELFWVEPDLRGIIPLDSFHYSKSLAKIIRQKPFDIRFDTAFAAVLDKCAEPAPDRPSTWINQTIRDLYTALFQMGHAHSVEAFEGDELVGGLYGVSLGAAFFGESMFSRRSNASKICLVHLVERLRAQGFVLLDTQFTTEHLKTFGAIDVAKDEYSKMLEEAVTMANVPFLLPEEISP.

Belongs to the L/F-transferase family.

The protein localises to the cytoplasm. The enzyme catalyses N-terminal L-lysyl-[protein] + L-leucyl-tRNA(Leu) = N-terminal L-leucyl-L-lysyl-[protein] + tRNA(Leu) + H(+). It carries out the reaction N-terminal L-arginyl-[protein] + L-leucyl-tRNA(Leu) = N-terminal L-leucyl-L-arginyl-[protein] + tRNA(Leu) + H(+). It catalyses the reaction L-phenylalanyl-tRNA(Phe) + an N-terminal L-alpha-aminoacyl-[protein] = an N-terminal L-phenylalanyl-L-alpha-aminoacyl-[protein] + tRNA(Phe). Functionally, functions in the N-end rule pathway of protein degradation where it conjugates Leu, Phe and, less efficiently, Met from aminoacyl-tRNAs to the N-termini of proteins containing an N-terminal arginine or lysine. In Allorhizobium ampelinum (strain ATCC BAA-846 / DSM 112012 / S4) (Agrobacterium vitis (strain S4)), this protein is Leucyl/phenylalanyl-tRNA--protein transferase.